The sequence spans 802 residues: Leucine--tRNA ligase (802 aa).

The 'HIGH' region motif lies at 40–51; sequence PYPSGAGLHVGH. The short motif at 576 to 580 is the 'KMSKS' region element; sequence KMSKS. Lys579 lines the ATP pocket.

This sequence belongs to the class-I aminoacyl-tRNA synthetase family.

Its subcellular location is the cytoplasm. The enzyme catalyses tRNA(Leu) + L-leucine + ATP = L-leucyl-tRNA(Leu) + AMP + diphosphate. This chain is Leucine--tRNA ligase, found in Bacillus mycoides (strain KBAB4) (Bacillus weihenstephanensis).